The following is a 405-amino-acid chain: Deoxyguanosinetriphosphate triphosphohydrolase-like protein (405 aa).

The region spanning 75–219 (RLTHTIEVAQ…AAIADDIAYN (145 aa)) is the HD domain.

The protein belongs to the dGTPase family. Type 2 subfamily.

This chain is Deoxyguanosinetriphosphate triphosphohydrolase-like protein, found in Rhizobium leguminosarum bv. trifolii (strain WSM2304).